Here is a 265-residue protein sequence, read N- to C-terminus: Phosphate import ATP-binding protein PstB (265 aa).

One can recognise an ABC transporter domain in the interval I18–I260. Position 50 to 57 (G50 to S57) interacts with ATP.

This sequence belongs to the ABC transporter superfamily. Phosphate importer (TC 3.A.1.7) family. As to quaternary structure, the complex is composed of two ATP-binding proteins (PstB), two transmembrane proteins (PstC and PstA) and a solute-binding protein (PstS).

The protein localises to the cell inner membrane. The enzyme catalyses phosphate(out) + ATP + H2O = ADP + 2 phosphate(in) + H(+). Functionally, part of the ABC transporter complex PstSACB involved in phosphate import. Responsible for energy coupling to the transport system. This chain is Phosphate import ATP-binding protein PstB, found in Roseobacter denitrificans (strain ATCC 33942 / OCh 114) (Erythrobacter sp. (strain OCh 114)).